Reading from the N-terminus, the 200-residue chain is NADH-quinone oxidoreductase subunit C (200 aa).

Belongs to the complex I 30 kDa subunit family. In terms of assembly, NDH-1 is composed of 14 different subunits. Subunits NuoB, C, D, E, F, and G constitute the peripheral sector of the complex.

The protein resides in the cell inner membrane. The catalysed reaction is a quinone + NADH + 5 H(+)(in) = a quinol + NAD(+) + 4 H(+)(out). NDH-1 shuttles electrons from NADH, via FMN and iron-sulfur (Fe-S) centers, to quinones in the respiratory chain. The immediate electron acceptor for the enzyme in this species is believed to be ubiquinone. Couples the redox reaction to proton translocation (for every two electrons transferred, four hydrogen ions are translocated across the cytoplasmic membrane), and thus conserves the redox energy in a proton gradient. This is NADH-quinone oxidoreductase subunit C from Burkholderia cenocepacia (strain HI2424).